Consider the following 541-residue polypeptide: Chaperonin GroEL 1 (541 aa).

ATP contacts are provided by residues 30–33 (TLGP), 87–91 (DGTTT), Gly414, 478–480 (NAA), and Asp494.

The protein belongs to the chaperonin (HSP60) family. Forms a cylinder of 14 subunits composed of two heptameric rings stacked back-to-back. Interacts with the co-chaperonin GroES.

Its subcellular location is the cytoplasm. The enzyme catalyses ATP + H2O + a folded polypeptide = ADP + phosphate + an unfolded polypeptide.. Functionally, together with its co-chaperonin GroES, plays an essential role in assisting protein folding. The GroEL-GroES system forms a nano-cage that allows encapsulation of the non-native substrate proteins and provides a physical environment optimized to promote and accelerate protein folding. This Thermobifida fusca (strain YX) protein is Chaperonin GroEL 1.